The following is a 405-amino-acid chain: uncharacterized protein (405 aa).

Residues 1–34 form the signal peptide; sequence MNKFLKYFLILLALVLIVVPIVFATLLFKTSQDA. Residues 348–359 show a composition bias toward basic and acidic residues; sequence EQNDTTDKDKTS. The segment at 348–405 is disordered; sequence EQNDTTDKDKTSNENSDSTNNSDSSNQQQPATDQNSNQNQGGTQQAPQASNNQNGVVN. Composition is skewed to low complexity over residues 360-373 and 381-392; these read NENS…DSSN and QNSNQNQGGTQQ. Polar residues predominate over residues 393 to 405; it reads APQASNNQNGVVN.

Belongs to the LytR/CpsA/Psr (LCP) family.

This is an uncharacterized protein from Staphylococcus aureus (strain NCTC 8325 / PS 47).